Consider the following 217-residue polypeptide: uncharacterized protein (217 aa).

The protein to M.tuberculosis Rv2926c.

This is an uncharacterized protein from Mycobacterium leprae (strain TN).